Reading from the N-terminus, the 254-residue chain is Phosphonates import ATP-binding protein PhnC (254 aa).

The ABC transporter domain maps to 2 to 246; the sequence is IQLKNVSKIY…VFDDIYNGGN (245 aa). An ATP-binding site is contributed by 35–42; sequence GLSGAGKS.

It belongs to the ABC transporter superfamily. Phosphonates importer (TC 3.A.1.9.1) family. In terms of assembly, the complex is composed of two ATP-binding proteins (PhnC), two transmembrane proteins (PhnE) and a solute-binding protein (PhnD).

It is found in the cell membrane. The catalysed reaction is phosphonate(out) + ATP + H2O = phosphonate(in) + ADP + phosphate + H(+). Functionally, part of the ABC transporter complex PhnCDE involved in phosphonates import. Responsible for energy coupling to the transport system. The sequence is that of Phosphonates import ATP-binding protein PhnC from Lactobacillus johnsonii (strain CNCM I-12250 / La1 / NCC 533).